The primary structure comprises 75 residues: UPF0352 protein CKO_00587 (75 aa).

It belongs to the UPF0352 family.

The protein is UPF0352 protein CKO_00587 of Citrobacter koseri (strain ATCC BAA-895 / CDC 4225-83 / SGSC4696).